We begin with the raw amino-acid sequence, 1092 residues long: NAD-specific glutamate dehydrogenase (1092 aa).

Lys-626 is an active-site residue.

Belongs to the Glu/Leu/Phe/Val dehydrogenases family. As to quaternary structure, homotetramer. Interacts with NNK1. Post-translationally, phosphorylated by a complex containing the NNK1 kinase.

It carries out the reaction L-glutamate + NAD(+) + H2O = 2-oxoglutarate + NH4(+) + NADH + H(+). Its function is as follows. NAD(+)-dependent glutamate dehydrogenase which degrades glutamate to ammonia and alpha-ketoglutarate. This chain is NAD-specific glutamate dehydrogenase (GDH2), found in Saccharomyces cerevisiae (strain ATCC 204508 / S288c) (Baker's yeast).